Here is a 351-residue protein sequence, read N- to C-terminus: MKRFVRTVLGDIDPKDLGICDCHDHLIKNWGPEAKEHPDFVMLSNEAAIKECLEFVHHGGRSIVTMDPPNVGRDVKRMVAIAEQLKGKLNIIMATGFHKAAFYDKGSSWLAQVPVNEIVPMLVAEIEEGMDLYNYSGPVVKRGKAKAGIIKAGTGYAAIDRLELKALEAVAITSITTGAPVLVHTQLGTMAYEAAQHLIDFGVNPRKIQLSHLNKNPDEYYYAKIIRELGVTLCFDGPDRVKYYPDCLLAKHIKYLVDLGFVKHITLALDAGRVLYQKHYGLEKGKECFGFAYLFERFIPLLKEVGVSDAAINTILVENLAEILAFDAPRQFNPKAVHPRVLALKKQLKIE.

The Zn(2+) site is built by His-23, His-25, Lys-151, His-184, His-212, and Asp-270. At Lys-151 the chain carries N6-carboxylysine.

The protein belongs to the metallo-dependent hydrolases superfamily. Phosphotriesterase family. The cofactor is Zn(2+).

This is an uncharacterized protein from Mycoplasma pneumoniae (strain ATCC 29342 / M129 / Subtype 1) (Mycoplasmoides pneumoniae).